The sequence spans 276 residues: Apulose-4-phosphate transketolase subunit A (276 aa).

This sequence belongs to the transketolase family. In terms of assembly, probable heterodimer composed of AptA and AptB. It depends on thiamine diphosphate as a cofactor.

The catalysed reaction is apulose 4-phosphate + D-glyceraldehyde 3-phosphate = D-xylulose 5-phosphate + dihydroxyacetone phosphate. Its pathway is carbohydrate metabolism. Functionally, involved in catabolism of D-apiose. Catalyzes the transfer of the glycolaldehyde group from apulose-4-phosphate to D-glyceraldehyde 3-phosphate, generating dihydroxyacetone phosphate and D-xylulose-5-phosphate. This Actinobacillus succinogenes (strain ATCC 55618 / DSM 22257 / CCUG 43843 / 130Z) protein is Apulose-4-phosphate transketolase subunit A.